The sequence spans 515 residues: Anthranilate synthase component 1 (515 aa).

L-tryptophan-binding positions include S50 and 281-283 (PYM). 316 to 317 (GT) serves as a coordination point for chorismate. Mg(2+) is bound at residue E343. Residues Y431, R451, 465–467 (GAG), and G467 each bind chorismate. E480 is a Mg(2+) binding site.

Belongs to the anthranilate synthase component I family. As to quaternary structure, heterotetramer consisting of two non-identical subunits: a beta subunit (TrpG) and a large alpha subunit (TrpE). Mg(2+) is required as a cofactor.

The catalysed reaction is chorismate + L-glutamine = anthranilate + pyruvate + L-glutamate + H(+). Its pathway is amino-acid biosynthesis; L-tryptophan biosynthesis; L-tryptophan from chorismate: step 1/5. Feedback inhibited by tryptophan. In terms of biological role, part of a heterotetrameric complex that catalyzes the two-step biosynthesis of anthranilate, an intermediate in the biosynthesis of L-tryptophan. In the first step, the glutamine-binding beta subunit (TrpG) of anthranilate synthase (AS) provides the glutamine amidotransferase activity which generates ammonia as a substrate that, along with chorismate, is used in the second step, catalyzed by the large alpha subunit of AS (TrpE) to produce anthranilate. In the absence of TrpG, TrpE can synthesize anthranilate directly from chorismate and high concentrations of ammonia. This chain is Anthranilate synthase component 1 (trpE), found in Bacillus subtilis (strain 168).